Reading from the N-terminus, the 489-residue chain is Endothelial zinc finger protein induced by tumor necrosis factor alpha (489 aa).

Residues 1 to 15 (MKELDPKNDISEDKL) show a composition bias toward basic and acidic residues. Disordered stretches follow at residues 1-61 (MKEL…PLGI) and 98-122 (EKGA…KPPM). 13 C2H2-type zinc fingers span residues 130-152 (YDCS…QRIH), 158-180 (FECD…QRVH), 186-208 (YACG…QRTH), 214-236 (YVCD…ERIH), 242-264 (YACG…QRTH), 270-292 (YVCP…QRTH), 298-320 (YACK…QRNH), 326-348 (YVCG…QRFH), 354-376 (FECS…QRIH), 382-404 (YECY…QIVH), 410-432 (YVCG…QRIH), 438-460 (YRCG…QRIH), and 466-488 (YRCG…LRIH).

It belongs to the krueppel C2H2-type zinc-finger protein family. Highly expressed in placenta, followed by brain, testis, pancreas, heart, small intestine, muscle, uterus, prostate and peripheral blood leukocytes. Not detected in liver, lung, colon, stomach, salivary and thyroid gland.

The protein resides in the nucleus. In terms of biological role, may be involved in transcriptional regulation. The sequence is that of Endothelial zinc finger protein induced by tumor necrosis factor alpha (ZNF71) from Homo sapiens (Human).